Here is an 810-residue protein sequence, read N- to C-terminus: Transducer protein CosT (810 aa).

Topologically, residues 1–38 (MSEPTADAGDNSPSSTDTAPLDRVKAIALLPLRSYLVK) are cytoplasmic. The helical transmembrane segment at 39–59 (FAVALLVILVIIAAGGFWVQA) threads the bilayer. Over 60-323 (DATATLEANT…AFALSNQIRT (264 aa)) the chain is Extracellular. A helical membrane pass occupies residues 324–344 (GILGFILVALVGVVLVGGTIG). One can recognise an HAMP 1 domain in the interval 345-397 (RNTAAAVQSLSAAAAEIEAGNYDVDVASSRRDEIGQLFASIGSMRDALVTQID). Over 345-810 (RNTAAAVQSL…DRDVTPTQTD (466 aa)) the chain is Cytoplasmic. Residues 403–427 (REQATEAQQDAEAERERAEDARERA) form a disordered region. Over residues 414–427 (EAERERAEDARERA) the composition is skewed to basic and acidic residues. In terms of domain architecture, HAMP 2 spans 439-493 (AELEAQAERYSDVMAACADGDLTRRMPADDTDNEAMAAIAASFNEMLAQWEHTII). The Methyl-accepting transducer domain maps to 512-748 (GAADAERASG…EAVSMTEEVA (237 aa)). Residues E556 and E739 each carry the glutamate methyl ester (Glu) modification. The tract at residues 751–784 (SDSTAGEAQSVSAAAEEQAASMSEISDSVESLSG) is disordered. Low complexity predominate over residues 755–774 (AGEAQSVSAAAEEQAASMSE). The span at 775 to 784 (ISDSVESLSG) shows a compositional bias: polar residues.

Belongs to the methyl-accepting chemotaxis (MCP) protein family. In terms of processing, methylated by CheR.

It is found in the cell membrane. Mediates chemotaxis towards compatible osmolytes. Probably transduces the signal from the substrate-binding protein CosB to the histidine kinase CheA. In Halobacterium salinarum (strain ATCC 700922 / JCM 11081 / NRC-1) (Halobacterium halobium), this protein is Transducer protein CosT (cosT).